We begin with the raw amino-acid sequence, 1064 residues long: Probable ATP-dependent DNA helicase CHR23 (1064 aa).

In terms of domain architecture, Helicase ATP-binding spans 398–563 (VSLYNNDYNG…WSLLNFLLPH (166 aa)). An ATP-binding site is contributed by 411 to 418 (DEMGLGKT). Residues 513–516 (DEGH) carry the DEAH box motif. Positions 699–866 (LLDRLLPKLK…DRREMLEEIM (168 aa)) constitute a Helicase C-terminal domain. Disordered stretches follow at residues 924–955 (AYTSETQEDKTNAKNHFGSLTGKRKRKEAVYS) and 967–1064 (MESE…SKRN). Residues 1002–1014 (ESDEEKEEEEEER) are compositionally biased toward acidic residues. A compositionally biased stretch (low complexity) spans 1048–1064 (SSPNSRGKGSSKGSKRN).

Belongs to the helicase family. In terms of tissue distribution, expressed in embryos, root apical meristem (RAM) and shoot apical meristem (SAM).

The protein resides in the nucleus. It carries out the reaction ATP + H2O = ADP + phosphate + H(+). Probable chromatin-remodeling factor that is functionally redundant with CHR12 in root and shoot stem cell initiation and root apical meristem (RAM) and shoot apical meristem (SAM) maintenance. Can associate with the promoter region of WOX5. May promote seed maturation and repress initiation of germination. May repress plant growth. The sequence is that of Probable ATP-dependent DNA helicase CHR23 from Arabidopsis thaliana (Mouse-ear cress).